Consider the following 454-residue polypeptide: Serine/threonine-protein kinase NLK2 (454 aa).

The 290-residue stretch at P67–L356 folds into the Protein kinase domain. ATP contacts are provided by residues I73–V81 and K96. D193 functions as the Proton acceptor in the catalytic mechanism.

The protein belongs to the protein kinase superfamily. CMGC Ser/Thr protein kinase family. MAP kinase subfamily. Interacts with sox11, hmgxb4/hmg2l1, rnf138/narf, stat3.1 and mef2a. It depends on Mg(2+) as a cofactor.

The protein resides in the nucleus. Its subcellular location is the cytoplasm. The enzyme catalyses L-seryl-[protein] + ATP = O-phospho-L-seryl-[protein] + ADP + H(+). It carries out the reaction L-threonyl-[protein] + ATP = O-phospho-L-threonyl-[protein] + ADP + H(+). With respect to regulation, activated by tyrosine and threonine phosphorylation. Its function is as follows. Negatively regulates Wnt/beta-catenin-signaling during development. Plays a role together with sox11 in neural induction during early embryogenesis. Involved in TGFbeta-mediated mesoderm induction in early embryos, acting downstream of map3k7/tak1 to phosphorylate stat3. Augments the rnf138/narf-directed ubiquitination and degradation of tcf/lef by enhancing the association of rnf138/narf and tcf/lef. Phosphorylates mef2a to play a role in anterior neural development, including eye formation. The sequence is that of Serine/threonine-protein kinase NLK2 (nlk.2) from Xenopus tropicalis (Western clawed frog).